A 238-amino-acid chain; its full sequence is Lactate utilization protein A (238 aa).

Belongs to the LutA/YkgE family.

Its function is as follows. Is involved in L-lactate degradation and allows cells to grow with lactate as the sole carbon source. The sequence is that of Lactate utilization protein A from Bacillus licheniformis (strain ATCC 14580 / DSM 13 / JCM 2505 / CCUG 7422 / NBRC 12200 / NCIMB 9375 / NCTC 10341 / NRRL NRS-1264 / Gibson 46).